A 201-amino-acid chain; its full sequence is Small ribosomal subunit protein uS4 (201 aa).

Residues 91–151 (ARLDNVIYRA…DRSRSMLWFD (61 aa)) enclose the S4 RNA-binding domain.

It belongs to the universal ribosomal protein uS4 family. Part of the 30S ribosomal subunit. Contacts protein S5. The interaction surface between S4 and S5 is involved in control of translational fidelity.

One of the primary rRNA binding proteins, it binds directly to 16S rRNA where it nucleates assembly of the body of the 30S subunit. Its function is as follows. With S5 and S12 plays an important role in translational accuracy. This chain is Small ribosomal subunit protein uS4, found in Corynebacterium urealyticum (strain ATCC 43042 / DSM 7109).